The chain runs to 2310 residues: Retinal-specific phospholipid-transporting ATPase ABCA4 (2310 aa).

Over 1–21 the chain is Cytoplasmic; sequence MGFLRQIQLLLWKNWTLRKRQ. The chain crosses the membrane as a helical span at residues 22-42; sequence KIRFVVELVWPLSLFLVLIWL. Over 43-646 the chain is Extracellular; it reads RNANPLYSQH…MPYPCFVDDS (604 aa). Disulfide bonds link Cys54–Cys81 and Cys75–Cys324. An N-linked (GlcNAc...) asparagine glycan is attached at Asn98. Ser336 and Asn338 together coordinate Mg(2+). An intrachain disulfide couples Cys370 to Cys519. N-linked (GlcNAc...) asparagine glycosylation is found at Asn415 and Asn504. An N-all-trans-retinylidenephosphatidylethanolamine-binding residues include Arg587 and Arg653. Cystine bridges form between Cys641-Cys1489, Cys1443-Cys1454, and Cys1487-Cys1501. The helical transmembrane segment at 647–667 threads the bilayer; the sequence is FMIILNRCFPIFMVLAWIYSV. Residues 668–699 lie on the Cytoplasmic side of the membrane; sequence SMTVKGIVLEKELRLKETLKNQGVSNAVIWCT. The chain crosses the membrane as a helical span at residues 700 to 720; the sequence is WFLDSFSIMALSIFLLTLFIM. Residues 721–730 are Extracellular-facing; it reads HGRILHYSDP. A helical transmembrane segment spans residues 731-751; that stretch reads FILFLFLLAFATATIMQSFLL. Topologically, residues 752–759 are cytoplasmic; sequence STLFSKAS. The chain crosses the membrane as a helical span at residues 760 to 780; sequence LAAACSGVIYFTLYLPHVLCF. Residues 781-835 are Extracellular-facing; sequence AWQDRMTADLKTTVSLLSSVAFGFGTEYLVRFEEQGLGLQWSNIGKSPLEGDEFS. The helical transmembrane segment at 836-856 threads the bilayer; it reads FLLSMKMMLLDAALYGLLAWY. Residues 857–1375 lie on the Cytoplasmic side of the membrane; that stretch reads LDQVFPGDYG…IRSRKDFVAQ (519 aa). A disordered region spans residues 891–910; sequence ERALEKTEPLTEEMEDPEHP. Position 901 is a phosphothreonine (Thr901). In terms of domain architecture, ABC transporter 1 spans 929–1160; that stretch reads VCVKNLVKVF…FGTGFYLTLV (232 aa). ATP is bound by residues Phe938, Gly966, and Lys969. Thr970 provides a ligand contact to Mg(2+). ATP is bound by residues Thr971, Gln1010, Lys1054, Gly1064, Gly1065, and His1118. Ser1185 bears the Phosphoserine mark. The tract at residues 1311–1344 is disordered; that stretch reads RQYAQAPHTCSPGQVDPPKGQPSPEPEDPGVPFN. A helical membrane pass occupies residues 1376-1396; it reads IVLPATFVFLALMLSIIVPPF. Topologically, residues 1397 to 1726 are extracellular; that stretch reads GEFPALTLHP…VSPTTYWLTN (330 aa). A glycan (N-linked (GlcNAc...) asparagine) is linked at Asn1468. 3 N-linked (GlcNAc...) asparagine glycosylation sites follow: Asn1528, Asn1587, and Asn1661. A helical membrane pass occupies residues 1727 to 1747; that stretch reads FLWDIMNYAVSAGLVVGIFIG. The Cytoplasmic portion of the chain corresponds to 1748 to 1758; sequence FQKKAYTSPDN. A helical transmembrane segment spans residues 1759-1779; sequence LPALVSLLMLYGWAVIPMMYP. The Extracellular portion of the chain corresponds to 1780–1791; that stretch reads ASFLFEVPSTAY. A helical transmembrane segment spans residues 1792–1812; the sequence is VALSCANLFIGINSSAITFVL. Residues 1813–1830 lie on the Cytoplasmic side of the membrane; the sequence is ELFENNRTLLRFNAMLRK. The helical transmembrane segment at 1831-1851 threads the bilayer; it reads LLIVFPHFCLGRGLIDLALSQ. Residues 1852-1872 are Extracellular-facing; the sequence is AVTDVYAQFGEEYSANPFQWD. The chain crosses the membrane as a helical span at residues 1873 to 1893; it reads LIGKNLVAMAIEGVVYFLLTL. At 1894 to 2310 the chain is on the cytoplasmic side; that stretch reads LIQHHFFLTR…AEDKHTRSPQ (417 aa). The 233-residue stretch at 1937-2169 folds into the ABC transporter 2 domain; it reads LKLNELTKVY…FGDGYIVTMK (233 aa). Asn1973, Gly1974, Lys1977, Thr1978, Thr1979, and Gly2072 together coordinate ATP. Thr1978 serves as a coordination point for Mg(2+). An essential for ATP binding and ATPase activity region spans residues 2243 to 2248; the sequence is VFVNFA. Residues 2266–2310 form a disordered region; it reads ASWQAKLEEKSGRLQTQEPLPAGSEQLANGSNPTAAEDKHTRSPQ. Basic and acidic residues predominate over residues 2301–2310; the sequence is AEDKHTRSPQ.

It belongs to the ABC transporter superfamily. ABCA family. N-glycosylated. Post-translationally, proteolytic cleavage by trypsin leads to a 120-kDa N-terminal fragment and a 115-kDa C-terminal fragment that are linked through disulfide bonds. In terms of processing, phosphorylation is independent of light exposure and modulates ATPase activity. In terms of tissue distribution, retinal-specific. Seems to be exclusively found in the rims of rod photoreceptor cells.

It localises to the membrane. Its subcellular location is the endoplasmic reticulum. It is found in the cell projection. The protein resides in the cilium. The protein localises to the photoreceptor outer segment. The catalysed reaction is an N-all-trans-retinylidenephosphatidylethanolamine(out) + ATP + H2O = an N-all-trans-retinylidenephosphatidylethanolamine(in) + ADP + phosphate + H(+). It catalyses the reaction ATP + H2O + phospholipidSide 1 = ADP + phosphate + phospholipidSide 2.. The enzyme catalyses a 1,2-diacyl-sn-glycero-3-phosphoethanolamine(out) + ATP + H2O = a 1,2-diacyl-sn-glycero-3-phosphoethanolamine(in) + ADP + phosphate + H(+). It carries out the reaction N-11-cis-retinylidenephosphatidylethanolamine(out) + ATP + H2O = N-11-cis-retinylidenephosphatidylethanolamine(in) + ADP + phosphate + H(+). The catalysed reaction is ATP + H2O = ADP + phosphate + H(+). With respect to regulation, ATPase activity is decreased by cholesterol and ceramide. Phospholipids translocase activity is highly reduced by berylium fluoride and aluminum floride. N-ethylmaleimide inhibits phospholipid translocase activity. Flippase that catalyzes in an ATP-dependent manner the transport of retinal-phosphatidylethanolamine conjugates like the 11-cis and all-trans isomers of N-retinylidene-phosphatidylethanolamine from the lumen to the cytoplasmic leaflet of photoreceptor outer segment disk membranes, where N-cis-retinylidene-phosphatidylethanolamine (N-cis-R-PE) is then isomerized to its all-trans isomer (N-trans-R-PE) and reduced by RDH8 to produce all-trans-retinol (all-trans-rol) and therefore prevents the accumulation of excess of 11-cis-retinal and its schiff-base conjugate and the formation of toxic bisretinoid. Displays ATPase activity in vitro in absence of retinal substrate. May display GTPase activity that is strongly influenced by the lipid environment and the presence of retinoid compounds. Binds the unprotonated form of N-retinylidene-phosphatidylethanolamine with high affinity in the absence of ATP and ATP binding and hydrolysis induce a protein conformational change that causes the dissociation of N-retinylidene-phosphatidylethanolamine. This is Retinal-specific phospholipid-transporting ATPase ABCA4 from Mus musculus (Mouse).